The primary structure comprises 279 residues: MAFIQEIKRKMTTVQSTIKITNAMKMVSRAKFVRFKKQFKEVNYFFNEFYKAVGQVVLSLKKMPKPLENPKTLWVMMSSSLGLCGQHNTNMNKLLQTKFQPGDKIFFLGRKNQSFWNKGDTDNPTVGYVDIQDRDLSFDYCQQVSDQIMEQFDLHQLDRICIIYTQFKNPLIQHANSFQVFPFDVAMFKAFNPVKMEQKLDFEPDEETIIKLISPQFFDIALYGGLVETKLCESASRQNAMDAAAKNAKDLYEKYSIQFNKLRQNSITQEIIEIIGGIS.

It belongs to the ATPase gamma chain family. In terms of assembly, F-type ATPases have 2 components, CF(1) - the catalytic core - and CF(0) - the membrane proton channel. CF(1) has five subunits: alpha(3), beta(3), gamma(1), delta(1), epsilon(1). CF(0) has three main subunits: a, b and c.

It localises to the cell membrane. Functionally, produces ATP from ADP in the presence of a proton gradient across the membrane. The gamma chain is believed to be important in regulating ATPase activity and the flow of protons through the CF(0) complex. This chain is ATP synthase gamma chain, found in Mycoplasma pneumoniae (strain ATCC 29342 / M129 / Subtype 1) (Mycoplasmoides pneumoniae).